A 349-amino-acid polypeptide reads, in one-letter code: Anthranilate phosphoribosyltransferase (349 aa).

5-phospho-alpha-D-ribose 1-diphosphate is bound by residues G84, 87–88 (GD), T92, 94–97 (NIST), 112–120 (KHGNRAASS), and S124. Anthranilate is bound at residue G84. S96 lines the Mg(2+) pocket. Residue N115 participates in anthranilate binding. Anthranilate is bound at residue R170. Mg(2+) contacts are provided by D228 and E229.

This sequence belongs to the anthranilate phosphoribosyltransferase family. In terms of assembly, homodimer. Mg(2+) serves as cofactor.

The catalysed reaction is N-(5-phospho-beta-D-ribosyl)anthranilate + diphosphate = 5-phospho-alpha-D-ribose 1-diphosphate + anthranilate. The protein operates within amino-acid biosynthesis; L-tryptophan biosynthesis; L-tryptophan from chorismate: step 2/5. Functionally, catalyzes the transfer of the phosphoribosyl group of 5-phosphorylribose-1-pyrophosphate (PRPP) to anthranilate to yield N-(5'-phosphoribosyl)-anthranilate (PRA). The polypeptide is Anthranilate phosphoribosyltransferase (Leifsonia xyli subsp. xyli (strain CTCB07)).